The chain runs to 267 residues: MYLELVKKNSVILDKDGNKVKEVELPFIFSFPVRKDIIRRVFLAEFTHSLQPKGRDPMAGKRTSAESFGINLGMARVPRVKNSGEAALAPNTVGGRLTFPPSVDKKLVEEVNDKEKQLAVISALSATADTVFVKARGHVFKDSVSFPIVVTDDIVSLKTASEVEEFLEKIGVYDDVKRVKERIRIRAGKGKMRGRKYKEPIGPLIIVHDSNSPIVKAARNIAGVDVVNAKDVSVIHLAPGAHPGRLTIYTETSIKILDERLSKRLVS.

It belongs to the universal ribosomal protein uL4 family. As to quaternary structure, part of the 50S ribosomal subunit.

In terms of biological role, one of the primary rRNA binding proteins, this protein initially binds near the 5'-end of the 23S rRNA. It is important during the early stages of 50S assembly. It makes multiple contacts with different domains of the 23S rRNA in the assembled 50S subunit and ribosome. Functionally, forms part of the polypeptide exit tunnel. In Saccharolobus islandicus (strain M.16.27) (Sulfolobus islandicus), this protein is Large ribosomal subunit protein uL4.